Reading from the N-terminus, the 209-residue chain is MDGVTVIDHPLVQHKLTIMRKKETSTGSFRRLLREISTLLCYEVTRDLEMTMETIETPLQPMESPILEGKKLVFASILRAGNGLLEGMLDLVPSARVSHIGVYRDHETLQPVEYYFKAPEDISERLIIVVDPMLATGNSSIAAIDKLKERGAHNIRFLCLLAAPEGIANFRAAHPDVPVFTAAIDSHLNELGYIVPGLGDAGDRMYGTK.

5-phospho-alpha-D-ribose 1-diphosphate-binding positions include R79, R104, and 131–139 (DPMLATGNS). Uracil is bound by residues I194 and 199–201 (GDA). 5-phospho-alpha-D-ribose 1-diphosphate is bound at residue D200.

This sequence belongs to the UPRTase family. Mg(2+) is required as a cofactor.

The enzyme catalyses UMP + diphosphate = 5-phospho-alpha-D-ribose 1-diphosphate + uracil. Its pathway is pyrimidine metabolism; UMP biosynthesis via salvage pathway; UMP from uracil: step 1/1. Its activity is regulated as follows. Allosterically activated by GTP. Functionally, catalyzes the conversion of uracil and 5-phospho-alpha-D-ribose 1-diphosphate (PRPP) to UMP and diphosphate. The protein is Uracil phosphoribosyltransferase of Rhizobium rhizogenes (strain K84 / ATCC BAA-868) (Agrobacterium radiobacter).